The sequence spans 177 residues: Shikimate kinase (177 aa).

Residue 17 to 22 coordinates ATP; it reads GAGKST. S21 is a Mg(2+) binding site. Residues D39, R63, and G85 each contribute to the substrate site. An ATP-binding site is contributed by R123. R142 is a substrate binding site. Residue R160 coordinates ATP.

The protein belongs to the shikimate kinase family. As to quaternary structure, monomer. The cofactor is Mg(2+).

It is found in the cytoplasm. The catalysed reaction is shikimate + ATP = 3-phosphoshikimate + ADP + H(+). It functions in the pathway metabolic intermediate biosynthesis; chorismate biosynthesis; chorismate from D-erythrose 4-phosphate and phosphoenolpyruvate: step 5/7. In terms of biological role, catalyzes the specific phosphorylation of the 3-hydroxyl group of shikimic acid using ATP as a cosubstrate. The chain is Shikimate kinase from Halorhodospira halophila (strain DSM 244 / SL1) (Ectothiorhodospira halophila (strain DSM 244 / SL1)).